Consider the following 78-residue polypeptide: Small integral membrane protein 1 (78 aa).

Met-1 carries the post-translational modification N-acetylmethionine. Positions Met-1–Ser-22 are disordered. Residues Met-1–Gly-48 are Cytoplasmic-facing. Residues Ser-6, Ser-17, Ser-22, and Ser-27 each carry the phosphoserine modification. Residues Ser-11–Val-21 show a composition bias toward basic and acidic residues. Residues Ile-49–Ile-69 form a helical; Signal-anchor for type II membrane protein membrane-spanning segment. The Extracellular segment spans residues Thr-70–Lys-78.

This sequence belongs to the SMIM1 family. In terms of assembly, homooligomer; disulfide-linked.

It localises to the cell membrane. Functionally, regulator of red blood cell formation. The sequence is that of Small integral membrane protein 1 from Mus musculus (Mouse).